The primary structure comprises 108 residues: UPF0060 membrane protein YnfA (108 aa).

Topologically, residues 1-5 (MLKTT) are periplasmic. A helical transmembrane segment spans residues 6–26 (LLFFVTALCEIIGCFLPWLWL). At 27-30 (KRGA) the chain is on the cytoplasmic side. The helical transmembrane segment at 31–51 (SVWWLLPAAASLALFVWLLTL) threads the bilayer. Residues 52-60 (HPAASGRVY) are Periplasmic-facing. The chain crosses the membrane as a helical span at residues 61-81 (AAYGGVYVCTALLWLRVVDGV). The Cytoplasmic segment spans residues 82 to 84 (RLT). Residues 85-105 (VYDWCGALIALCGMLIIVVGW) form a helical membrane-spanning segment. The Periplasmic portion of the chain corresponds to 106–108 (GRT).

It belongs to the UPF0060 family.

It localises to the cell inner membrane. This chain is UPF0060 membrane protein YnfA, found in Salmonella agona (strain SL483).